The primary structure comprises 428 residues: 3-phosphoshikimate 1-carboxyvinyltransferase (428 aa).

The 3-phosphoshikimate site is built by Lys21, Ser22, and Arg26. Lys21 contributes to the phosphoenolpyruvate binding site. Phosphoenolpyruvate-binding residues include Gly91 and Arg119. Positions 164, 166, 313, and 340 each coordinate 3-phosphoshikimate. Gln166 is a phosphoenolpyruvate binding site. The Proton acceptor role is filled by Asp313. Arg344 and Arg386 together coordinate phosphoenolpyruvate.

Belongs to the EPSP synthase family. Monomer.

The protein resides in the cytoplasm. It carries out the reaction 3-phosphoshikimate + phosphoenolpyruvate = 5-O-(1-carboxyvinyl)-3-phosphoshikimate + phosphate. It participates in metabolic intermediate biosynthesis; chorismate biosynthesis; chorismate from D-erythrose 4-phosphate and phosphoenolpyruvate: step 6/7. Its function is as follows. Catalyzes the transfer of the enolpyruvyl moiety of phosphoenolpyruvate (PEP) to the 5-hydroxyl of shikimate-3-phosphate (S3P) to produce enolpyruvyl shikimate-3-phosphate and inorganic phosphate. The sequence is that of 3-phosphoshikimate 1-carboxyvinyltransferase from Campylobacter jejuni subsp. jejuni serotype O:6 (strain 81116 / NCTC 11828).